The chain runs to 368 residues: Deoxyhypusine synthase (368 aa).

NAD(+)-binding positions include 104–108, 130–132, Glu136, and Asp237; these read SNLVS and TTG. Residue 135 to 136 coordinates spermidine; it reads EE. Residue Asp242 participates in spermidine binding. Gly284 is an NAD(+) binding site. Position 289 (His289) interacts with spermidine. 309–310 serves as a coordination point for NAD(+); the sequence is TG. Residues 315-317 and 324-330 contribute to the spermidine site; these read GSD and EAVSWGK. The Nucleophile role is filled by Lys330. 343 to 344 provides a ligand contact to NAD(+); that stretch reads DA.

Belongs to the deoxyhypusine synthase family. NAD(+) is required as a cofactor.

It carries out the reaction [eIF5A protein]-L-lysine + spermidine = [eIF5A protein]-deoxyhypusine + propane-1,3-diamine. The protein operates within protein modification; eIF5A hypusination. Catalyzes the NAD-dependent oxidative cleavage of spermidine and the subsequent transfer of the butylamine moiety of spermidine to the epsilon-amino group of a specific lysine residue of the eIF-5A precursor protein to form the intermediate deoxyhypusine residue. Also able to produce homospermidine from putrescine. This chain is Deoxyhypusine synthase (DHS), found in Arabidopsis thaliana (Mouse-ear cress).